A 488-amino-acid polypeptide reads, in one-letter code: MSIPGVNASFSSTPERLNSPVTIPAVMFIFGVVGNLVAIVVLCKSRKEQKETTFYTLVCGLAVTDLLGTLLVSPVTIATYMKGQWPGDQALCDYSTFILLFFGLSGLSIICAMSIERYLAINHAYFYSHYVDKRLAGLTLFAVYASNVLFCALPNMGLGRSERQYPGTWCFIDWTTNVTAYAAFSYMYAGFSSFLILATVLCNVLVCGALLRMLRQFMRRTSLGTEQHHAAAAAAVASVACRGHAAASPALQRLSDFRRRRSFRRIAGAEIQMVILLIATSLVVLICSIPLVVRVFINQLYQPSVVKDISRNPDLQAIRIASVNPILDPWIYILLRKTVLSKAIEKIKCLFCRIGGSGRDGSAQHCSESRRTSSAMSGHSRSFLSRELREISSTSHTLLYLPDLTESSLGGKNLLPGTHGMGLTQADTTSLRTLRISETSDSSQGQDSESVLLVDEVSGSQREEPASKGNSLQVTFPSETLKLSEKCI.

The Extracellular segment spans residues 1–19 (MSIPGVNASFSSTPERLNS). Asparagine 7 carries N-linked (GlcNAc...) asparagine glycosylation. A helical membrane pass occupies residues 20-43 (PVTIPAVMFIFGVVGNLVAIVVLC). The Cytoplasmic segment spans residues 44 to 55 (KSRKEQKETTFY). Residues 56–79 (TLVCGLAVTDLLGTLLVSPVTIAT) form a helical membrane-spanning segment. At 80 to 96 (YMKGQWPGDQALCDYST) the chain is on the extracellular side. Cysteine 92 and cysteine 170 are joined by a disulfide. Residues 97 to 115 (FILLFFGLSGLSIICAMSI) form a helical membrane-spanning segment. Residues 116-135 (ERYLAINHAYFYSHYVDKRL) are Cytoplasmic-facing. The chain crosses the membrane as a helical span at residues 136-160 (AGLTLFAVYASNVLFCALPNMGLGR). At 161-184 (SERQYPGTWCFIDWTTNVTAYAAF) the chain is on the extracellular side. Residues 185–211 (SYMYAGFSSFLILATVLCNVLVCGALL) form a helical membrane-spanning segment. Over 212 to 270 (RMLRQFMRRTSLGTEQHHAAAAAAVASVACRGHAAASPALQRLSDFRRRRSFRRIAGAE) the chain is Cytoplasmic. The chain crosses the membrane as a helical span at residues 271-298 (IQMVILLIATSLVVLICSIPLVVRVFIN). Residues 299–315 (QLYQPSVVKDISRNPDL) lie on the Extracellular side of the membrane. The chain crosses the membrane as a helical span at residues 316–335 (QAIRIASVNPILDPWIYILL). Topologically, residues 336–488 (RKTVLSKAIE…ETLKLSEKCI (153 aa)) are cytoplasmic. Residues 358 to 380 (GRDGSAQHCSESRRTSSAMSGHS) form a disordered region. 4 positions are modified to phosphoserine: serine 377, serine 380, serine 382, and serine 385.

Belongs to the G-protein coupled receptor 1 family. As to quaternary structure, interacts with FEM1A. In terms of processing, phosphorylation mediates agonist-mediated desensitization by promoting cytoplasmic retention.

Its subcellular location is the cell membrane. Functionally, receptor for prostaglandin E2 (PGE2). The activity of this receptor is mediated by G(s) proteins that stimulate adenylate cyclase. Has a relaxing effect on smooth muscle. May play an important role in regulating renal hemodynamics, intestinal epithelial transport, adrenal aldosterone secretion, and uterine function. The protein is Prostaglandin E2 receptor EP4 subtype (Ptger4) of Rattus norvegicus (Rat).